A 73-amino-acid chain; its full sequence is MVDFYFIEEKVAYRAAFTTTGKIAATLGLAKTQAVLGPKGYGLLLNEIQWMLRGEINEVWAGLLEALRNNSLI.

The N-terminal stretch at 1–30 (MVDFYFIEEKVAYRAAFTTTGKIAATLGLA) is a signal peptide.

This is an uncharacterized protein from Archaeoglobus fulgidus (strain ATCC 49558 / DSM 4304 / JCM 9628 / NBRC 100126 / VC-16).